The primary structure comprises 486 residues: Elastin-binding protein EbpS (486 aa).

Residues 1–40 (MSNNFKDDFEKNRQSIDTNSHQDHTEDVEKDQSELEHQDT) show a composition bias toward basic and acidic residues. Positions 1–314 (MSNNFKDDFE…HHDRDKERKK (314 aa)) are disordered. The Extracellular segment spans residues 2–204 (SNNFKDDFEK…ESKDHHSGKK (203 aa)). The interval 14-34 (QSIDTNSHQDHTEDVEKDQSE) is elastin-binding. The span at 64 to 85 (TNHNKQVHNESQTSEDNVQNEA) shows a compositional bias: polar residues. Composition is skewed to basic and acidic residues over residues 103–117 (EPSH…EEGY), 126–160 (DKSH…KSEA), and 180–199 (SKDK…SKDH). Positions 204-225 (KGAAIGAGTAGVAGAAGAMGVS) are enriched in low complexity. A helical membrane pass occupies residues 205–225 (GAAIGAGTAGVAGAAGAMGVS). The Cytoplasmic portion of the chain corresponds to 226–319 (KAKKHSNDAQ…KERKKGGMAK (94 aa)). Residues 233-246 (DAQNKSNSGKVNNS) are compositionally biased toward polar residues. Over residues 247-259 (TEDKASEDKSKEH) the composition is skewed to basic and acidic residues. The span at 278–297 (GAASNSASAASKPHASNNAS) shows a compositional bias: low complexity. Basic and acidic residues predominate over residues 300 to 314 (NDEHDHHDRDKERKK). Residues 320 to 340 (VLLPLIAAVLIIGALAIFGGM) form a helical membrane-spanning segment. The Extracellular portion of the chain corresponds to 341–486 (ALNNHNNGTK…IRNGQQIVIP (146 aa)). A disordered region spans residues 351–440 (ENKIANTNKN…QRQGGGQRHT (90 aa)). Positions 361 to 398 (NADESKDKDTSKDASKDKSKSTDSDKSKDDQDKATKDE) are enriched in basic and acidic residues. Over residues 403 to 431 (QNNANQANNQAQNNQNQQQANQNQQQQQQ) the composition is skewed to low complexity. The 49-residue stretch at 437–485 (QRHTVNGQENLYRIAIQYYGSGSPENVEKIRRANGLSGNNIRNGQQIVI) folds into the LysM domain.

It localises to the cell membrane. Functionally, promotes binding of soluble elastin peptides and tropoelastin to S.aureus cells although it is not able to promote bacterial adherence to immobilized elastin and, therefore, is not a microbial surface component recognizing adhesive matrix molecule (MSCRAMM). The protein is Elastin-binding protein EbpS (ebpS) of Staphylococcus aureus (strain MRSA252).